A 166-amino-acid polypeptide reads, in one-letter code: NAD(P)H-quinone oxidoreductase subunit I, chloroplastic (166 aa).

2 consecutive 4Fe-4S ferredoxin-type domains span residues 55-84 and 95-124; these read GRIHFEFDKCIACEVCVRVCPIDLPVVDWK and LNYSIDFGICIFCGNCVEYCPTNCLSMTEE. Residues Cys-64, Cys-67, Cys-70, Cys-74, Cys-104, Cys-107, Cys-110, and Cys-114 each coordinate [4Fe-4S] cluster.

Belongs to the complex I 23 kDa subunit family. In terms of assembly, NDH is composed of at least 16 different subunits, 5 of which are encoded in the nucleus. [4Fe-4S] cluster serves as cofactor.

It is found in the plastid. Its subcellular location is the chloroplast thylakoid membrane. It carries out the reaction a plastoquinone + NADH + (n+1) H(+)(in) = a plastoquinol + NAD(+) + n H(+)(out). The enzyme catalyses a plastoquinone + NADPH + (n+1) H(+)(in) = a plastoquinol + NADP(+) + n H(+)(out). In terms of biological role, NDH shuttles electrons from NAD(P)H:plastoquinone, via FMN and iron-sulfur (Fe-S) centers, to quinones in the photosynthetic chain and possibly in a chloroplast respiratory chain. The immediate electron acceptor for the enzyme in this species is believed to be plastoquinone. Couples the redox reaction to proton translocation, and thus conserves the redox energy in a proton gradient. This is NAD(P)H-quinone oxidoreductase subunit I, chloroplastic from Oxypappus scaber.